Reading from the N-terminus, the 2167-residue chain is Beige protein homolog 1 (2167 aa).

The region spanning 1368–1499 (KDNDSIATIW…VRDDVLRVLN (132 aa)) is the BEACH-type PH domain. The BEACH domain maps to 1545-1839 (SANNSLIDGF…QIFQEPHPEK (295 aa)). Residue lysine 1667 forms a Glycyl lysine isopeptide (Lys-Gly) (interchain with G-Cter in ubiquitin) linkage. WD repeat units follow at residues 1927-1965 (THMAQITSFAYWKLGEFITGDKNGLIKVWKYRKDKHSVS), 1976-2015 (GHLCELKEMRCYHDYNTLLTLDISGLVYVWDMINFELVRQ), 2017-2054 (TNDAQKVAISQHAGSIMVLTKNNAISIFNLNGQIYTSK), 2072-2111 (KLDAGYRKHIYWKEMEILLVGFEDGTIEIYELFLNFHNEW), and 2129-2167 (SIKGQGKTYLSQKRRKDTAEPHEIEVIAGTLDGRLAIWY).

The protein resides in the cytoplasm. Its subcellular location is the membrane. May be involved in protein sorting and cell wall formation. This chain is Beige protein homolog 1 (BPH1), found in Saccharomyces cerevisiae (strain ATCC 204508 / S288c) (Baker's yeast).